The primary structure comprises 216 residues: Adenylate kinase (216 aa).

13–18 (GAGKGT) serves as a coordination point for ATP. Positions 33–66 (TTGDALRANKDMDISDMDTEYDTPREYMEAGDLV) are NMP. AMP is bound by residues Thr34, Arg39, 64-66 (DLV), 89-92 (GYPR), and Gln96. Positions 125–162 (GRRVCDDCGTNYHVEFNQPEEDGVCDECGGDLIQRDDD) are LID. ATP is bound at residue Arg126. 4 residues coordinate Zn(2+): Cys129, Cys132, Cys149, and Cys152. Arg159 and Arg170 together coordinate AMP. Gln198 provides a ligand contact to ATP.

This sequence belongs to the adenylate kinase family. Monomer.

It is found in the cytoplasm. It catalyses the reaction AMP + ATP = 2 ADP. It participates in purine metabolism; AMP biosynthesis via salvage pathway; AMP from ADP: step 1/1. Its function is as follows. Catalyzes the reversible transfer of the terminal phosphate group between ATP and AMP. Plays an important role in cellular energy homeostasis and in adenine nucleotide metabolism. This is Adenylate kinase from Haloarcula marismortui (strain ATCC 43049 / DSM 3752 / JCM 8966 / VKM B-1809) (Halobacterium marismortui).